A 183-amino-acid polypeptide reads, in one-letter code: Putative manganese efflux pump MntP (183 aa).

Helical transmembrane passes span 6–26, 40–60, 64–84, 101–121, 135–155, and 158–178; these read LFLI…CIGL, IYFG…GFLF, IATM…IIMI, MNII…FTAL, LFIG…SKYL, and IDVI…FFGL.

The protein belongs to the MntP (TC 9.B.29) family.

It is found in the cell membrane. In terms of biological role, probably functions as a manganese efflux pump. This chain is Putative manganese efflux pump MntP, found in Clostridium tetani (strain Massachusetts / E88).